We begin with the raw amino-acid sequence, 459 residues long: Phosphoglucosamine mutase (459 aa).

Catalysis depends on S105, which acts as the Phosphoserine intermediate. Mg(2+) is bound by residues S105, D252, D254, and D256. The residue at position 105 (S105) is a Phosphoserine.

Belongs to the phosphohexose mutase family. It depends on Mg(2+) as a cofactor. Post-translationally, activated by phosphorylation.

It carries out the reaction alpha-D-glucosamine 1-phosphate = D-glucosamine 6-phosphate. Its function is as follows. Catalyzes the conversion of glucosamine-6-phosphate to glucosamine-1-phosphate. The protein is Phosphoglucosamine mutase of Bifidobacterium adolescentis (strain ATCC 15703 / DSM 20083 / NCTC 11814 / E194a).